A 402-amino-acid chain; its full sequence is Multidrug resistance protein MdtH (402 aa).

Helical transmembrane passes span 13–33 (YFLLIDNMLVVLGFFVVFPLI), 34–54 (SIRFVDSLGWAALMVGIALGL), 99–116 (PWVLWLSCVLSGLGGTLF), 139–159 (LLMMQDSAGAVTGALIGSWLL), 165–185 (LVCGVGALLFVLCAGFNAWLL), 214–234 (VLTLTGYYMLAVQVMLMLPVM), 243–263 (AAVKWMYAIEAVLSLTLLYPL), 277–297 (LMAGLLVMTFSLVPIGLASNL), 300–320 (LFTLICLFYIGSIIAEPARET), 340–360 (LGLAFGGALGYAGGGWLFDAG), and 368–388 (LPWAMLGVIGVGTFLMLWWQF).

This sequence belongs to the major facilitator superfamily. DHA1 family. MdtH (TC 2.A.1.2.21) subfamily.

The protein localises to the cell inner membrane. This Cronobacter sakazakii (strain ATCC BAA-894) (Enterobacter sakazakii) protein is Multidrug resistance protein MdtH.